The following is a 426-amino-acid chain: ORC1-type DNA replication protein 1 (426 aa).

Residues Val62–Leu66, Tyr211, and Arg223 each bind ATP.

Belongs to the CDC6/cdc18 family.

Involved in regulation of DNA replication. This Haloarcula marismortui (strain ATCC 43049 / DSM 3752 / JCM 8966 / VKM B-1809) (Halobacterium marismortui) protein is ORC1-type DNA replication protein 1 (cdc6a).